The primary structure comprises 181 residues: Large ribosomal subunit protein uL5 (181 aa).

The protein belongs to the universal ribosomal protein uL5 family. Part of the 50S ribosomal subunit; part of the 5S rRNA/L5/L18/L25 subcomplex. Contacts the 5S rRNA and the P site tRNA. Forms a bridge to the 30S subunit in the 70S ribosome.

Functionally, this is one of the proteins that bind and probably mediate the attachment of the 5S RNA into the large ribosomal subunit, where it forms part of the central protuberance. In the 70S ribosome it contacts protein S13 of the 30S subunit (bridge B1b), connecting the 2 subunits; this bridge is implicated in subunit movement. Contacts the P site tRNA; the 5S rRNA and some of its associated proteins might help stabilize positioning of ribosome-bound tRNAs. The polypeptide is Large ribosomal subunit protein uL5 (Thermosipho africanus (strain TCF52B)).